We begin with the raw amino-acid sequence, 293 residues long: sn-glycerol-3-phosphate transport system permease protein UgpA (293 aa).

6 helical membrane passes run 10–30 (ILPY…FFWP), 72–92 (VTVI…LLLA), 108–128 (LLIW…LFMF), 156–176 (MILI…LFFV), 204–224 (IIFP…TVYA), and 261–281 (LGSS…LTAF). The ABC transmembrane type-1 domain occupies 66–282 (YLNSLKVTVI…AIVIGLTAFQ (217 aa)).

The protein belongs to the binding-protein-dependent transport system permease family. In terms of assembly, the complex is composed of two ATP-binding proteins (UgpC), two transmembrane proteins (UgpA and UgpE) and a solute-binding protein (UgpB).

The protein localises to the cell inner membrane. Part of the ABC transporter complex UgpBAEC involved in sn-glycerol-3-phosphate (G3P) import. Probably responsible for the translocation of the substrate across the membrane. This is sn-glycerol-3-phosphate transport system permease protein UgpA (ugpA) from Rhizobium meliloti (strain 1021) (Ensifer meliloti).